Here is a 295-residue protein sequence, read N- to C-terminus: 4-diphosphocytidyl-2-C-methyl-D-erythritol kinase (295 aa).

Lysine 15 is a catalytic residue. 102–112 (PIASGVGGGSS) contacts ATP. The active site involves aspartate 144.

The protein belongs to the GHMP kinase family. IspE subfamily.

It carries out the reaction 4-CDP-2-C-methyl-D-erythritol + ATP = 4-CDP-2-C-methyl-D-erythritol 2-phosphate + ADP + H(+). Its pathway is isoprenoid biosynthesis; isopentenyl diphosphate biosynthesis via DXP pathway; isopentenyl diphosphate from 1-deoxy-D-xylulose 5-phosphate: step 3/6. Its function is as follows. Catalyzes the phosphorylation of the position 2 hydroxy group of 4-diphosphocytidyl-2C-methyl-D-erythritol. This chain is 4-diphosphocytidyl-2-C-methyl-D-erythritol kinase, found in Mesorhizobium japonicum (strain LMG 29417 / CECT 9101 / MAFF 303099) (Mesorhizobium loti (strain MAFF 303099)).